The sequence spans 500 residues: Lysine--tRNA ligase (500 aa).

Residues E410 and E417 each coordinate Mg(2+).

This sequence belongs to the class-II aminoacyl-tRNA synthetase family. Homodimer. Requires Mg(2+) as cofactor.

The protein localises to the cytoplasm. The enzyme catalyses tRNA(Lys) + L-lysine + ATP = L-lysyl-tRNA(Lys) + AMP + diphosphate. This Pseudomonas entomophila (strain L48) protein is Lysine--tRNA ligase.